The following is a 1038-amino-acid chain: DNA polymerase delta catalytic subunit (1038 aa).

The tract at residues 1–29 (MSHSIPITSSPPPALKKLKLPNGSEEPSE) is disordered. Zn(2+)-binding residues include cysteine 942, cysteine 945, cysteine 958, and cysteine 961. The segment at 942–961 (CVSCRTPLKKDNLGALCPNC) adopts a CysA-type zinc-finger fold. Residues cysteine 992, cysteine 995, cysteine 1005, and cysteine 1010 each contribute to the [4Fe-4S] cluster site. The CysB motif signature appears at 992-1010 (CQRCQGSLHQEVLCSNKDC).

Belongs to the DNA polymerase type-B family. As to quaternary structure, heterodimer with subunits of 125 kDa and 50 kDa. The 125 kDa subunit contains the polymerase active site and most likely the active site for the 3'-5' exonuclease activity. [4Fe-4S] cluster is required as a cofactor.

Its subcellular location is the nucleus. The catalysed reaction is DNA(n) + a 2'-deoxyribonucleoside 5'-triphosphate = DNA(n+1) + diphosphate. Functionally, this polymerase possesses two enzymatic activities: DNA synthesis (polymerase) and an exonucleolytic activity that degrades single-stranded DNA in the 3'- to 5'-direction. This is DNA polymerase delta catalytic subunit (POL3) from Candida albicans (Yeast).